Reading from the N-terminus, the 262-residue chain is MQVDLLGSAQSAHALHLFHQHSPLVHCMTNDVVQTFTANTLLALGASPAMVIETEEASQFAAIASALLINVGTLTQPRAQAMRAAVEQAKSSQTPWTLDPVAVGALDYRRHFCHELLSFKPAAIRGNASEIMALAGIANGGRGVDTTDAAANAIPAAQTLARETGAIVVVTGEVDYVTDGHRAVGIHGGDPLMTKVVGTGCALSAVVAACCALPGDTLENVASACHWMKQAGERAVARSEGLGSFVPHFLDALWQLTQEVQA.

Met50 provides a ligand contact to substrate. The ATP site is built by Arg125 and Thr171. Position 198 (Gly198) interacts with substrate.

This sequence belongs to the Thz kinase family. The cofactor is Mg(2+).

It catalyses the reaction 5-(2-hydroxyethyl)-4-methylthiazole + ATP = 4-methyl-5-(2-phosphooxyethyl)-thiazole + ADP + H(+). The protein operates within cofactor biosynthesis; thiamine diphosphate biosynthesis; 4-methyl-5-(2-phosphoethyl)-thiazole from 5-(2-hydroxyethyl)-4-methylthiazole: step 1/1. Functionally, catalyzes the phosphorylation of the hydroxyl group of 4-methyl-5-beta-hydroxyethylthiazole (THZ). This chain is Hydroxyethylthiazole kinase, found in Shigella sonnei (strain Ss046).